We begin with the raw amino-acid sequence, 82 residues long: Ranatensin (82 aa).

A signal peptide spans Met1–Ser27. A propeptide spanning residues Val28–Arg47 is cleaved from the precursor. Met58 carries the post-translational modification Methionine amide. A propeptide spanning residues Ser62–Ser82 is cleaved from the precursor.

The protein belongs to the bombesin/neuromedin-B/ranatensin family. Expressed by the skin glands.

It localises to the secreted. The protein is Ranatensin of Lithobates pipiens (Northern leopard frog).